The primary structure comprises 417 residues: Phosphoglycerate kinase 1 (417 aa).

Ser2 is subject to N-acetylserine. A phosphoserine mark is found at Ser2 and Ser4. An N6-succinyllysine modification is found at Lys6. Position 11 is an N6-acetyllysine (Lys11). Residues Val23, Asp24, Phe25, Asn26, Gln38, and Arg39 each contribute to the (2R)-3-phosphoglycerate site. A mitochondrial targeting region exposed following cis-trans isomerization by PIN1 and recognized by the TOM complex for mitochondrial translocation of the protein region spans residues 38–43 (QRIKAA). Position 48 is an N6-acetyllysine; alternate (Lys48). Residue Lys48 is modified to N6-succinyllysine; alternate. Positions 62, 63, 65, and 66 each coordinate (2R)-3-phosphoglycerate. An N6-acetyllysine modification is found at Lys75. Tyr76 is subject to Phosphotyrosine. Residues Lys86 and Lys91 each carry the N6-acetyllysine modification. At Lys97 the chain carries N6-acetyllysine; alternate. Position 97 is an N6-(2-hydroxyisobutyryl)lysine; alternate (Lys97). (2R)-3-phosphoglycerate contacts are provided by Leu122 and Arg123. Position 131 is an N6-acetyllysine; alternate (Lys131). An N6-malonyllysine; alternate modification is found at Lys131. The residue at position 146 (Lys146) is an N6-acetyllysine. Positions 170 and 171 each coordinate (2R)-3-phosphoglycerate. At Lys191 the chain carries N6-succinyllysine. Tyr196 carries the post-translational modification Phosphotyrosine. Lys199 bears the N6-acetyllysine mark. Ser203 is modified (phosphoserine). Gly214 contacts ADP. Gly214 contributes to the CDP binding site. Positions 215 and 216 each coordinate AMP. Ala215 lines the ATP pocket. Ala215 is a Mg(2+) binding site. N6-(2-hydroxyisobutyryl)lysine is present on Lys216. Positions 218 and 219 each coordinate Mg(2+). Asp219 is a CDP binding site. Lys220 is an AMP binding site. Residue Lys220 participates in ATP binding. Lys220 is modified (N6-(2-hydroxyisobutyryl)lysine). Position 238 (Gly238) interacts with ADP. Gly238 is a binding site for CDP. Gly239 contributes to the AMP binding site. Gly239 is an ATP binding site. Lys267 and Lys291 each carry N6-acetyllysine. Residue Gly313 participates in AMP binding. ATP is bound at residue Gly313. Lys323 is modified (N6-(2-hydroxyisobutyryl)lysine). Residues Gly338, Val340, and Phe343 each coordinate CDP. Phe343 provides a ligand contact to ADP. Glu344 lines the AMP pocket. Glu344 contacts ATP. The residue at position 361 (Lys361) is an N6-acetyllysine. The ATP site is built by Asp375 and Thr376. Residue Asp375 participates in Mg(2+) binding.

It belongs to the phosphoglycerate kinase family. As to quaternary structure, monomer. Interacts with kinase MAPK1/ERK2; the interaction is direct, occurs under hypoxic conditions, and promotes its interaction with PIN1. Interacts with peptidyl-prolyl cis-trans isomerase PIN1; the interaction is direct, occurs under hypoxic conditions, and targets the protein to the mitochondrion by promoting interactions with the TOM complex. Interacts with mitochondrial circRNA mcPGK1 (via its 2nd stem-loop); the interaction is direct and targets the protein to the mitochondrion by promoting interactions with the TOM complex. Interacts with pyruvate dehydrogenase kinase PDK1; the interaction is direct, occurs under hypoxic conditions and leads to PDK1-mediated inhibition of pyruvate dehydrogenase complex activity. Mg(2+) is required as a cofactor. In terms of processing, phosphorylated at Ser-203 by MAPK1/ERK2 under hypoxic conditions, which promotes its mitochondrial targeting.

It is found in the cytoplasm. The protein localises to the cytosol. The protein resides in the mitochondrion matrix. It catalyses the reaction (2R)-3-phosphoglycerate + ATP = (2R)-3-phospho-glyceroyl phosphate + ADP. It carries out the reaction L-seryl-[protein] + ATP = O-phospho-L-seryl-[protein] + ADP + H(+). It participates in carbohydrate degradation; glycolysis; pyruvate from D-glyceraldehyde 3-phosphate: step 2/5. Functionally, catalyzes one of the two ATP producing reactions in the glycolytic pathway via the reversible conversion of 1,3-diphosphoglycerate to 3-phosphoglycerate. Both L- and D- forms of purine and pyrimidine nucleotides can be used as substrates, but the activity is much lower on pyrimidines. In addition to its role as a glycolytic enzyme, it seems that PGK-1 acts as a polymerase alpha cofactor protein (primer recognition protein). Acts as a protein kinase when localized to the mitochondrion where it phosphorylates pyruvate dehydrogenase kinase PDK1 to inhibit pyruvate dehydrogenase complex activity and suppress the formation of acetyl-coenzyme A from pyruvate, and consequently inhibit oxidative phosphorylation and promote glycolysis. May play a role in sperm motility. The chain is Phosphoglycerate kinase 1 (PGK1) from Macaca fascicularis (Crab-eating macaque).